The primary structure comprises 65 residues: Large ribosomal subunit protein bL35 (65 aa).

A disordered region spans residues 1 to 47; it reads MPKIKTNRGAAKRFRKTASGKIKRNSAFTSHILTSKTRKRKRQLRSS. Residues 10–24 are compositionally biased toward basic residues; sequence AAKRFRKTASGKIKR. The span at 26-35 shows a compositional bias: polar residues; it reads SAFTSHILTS.

The protein belongs to the bacterial ribosomal protein bL35 family.

The polypeptide is Large ribosomal subunit protein bL35 (Geobacter metallireducens (strain ATCC 53774 / DSM 7210 / GS-15)).